Reading from the N-terminus, the 341-residue chain is Ribulose-5-phosphate reductase (341 aa).

Residues C38, H64, E65, and E144 each contribute to the Zn(2+) site.

Belongs to the zinc-containing alcohol dehydrogenase family. Zn(2+) is required as a cofactor.

It carries out the reaction D-ribitol 5-phosphate + NADP(+) = D-ribulose 5-phosphate + NADPH + H(+). The protein operates within cell wall biogenesis; poly(ribitol phosphate) teichoic acid biosynthesis. Functionally, catalyzes the NADPH dependent reduction of D-ribulose 5-phosphate to D-ribitol 5-phosphate. This chain is Ribulose-5-phosphate reductase, found in Bacillus spizizenii (strain ATCC 23059 / NRRL B-14472 / W23) (Bacillus subtilis subsp. spizizenii).